The primary structure comprises 146 residues: UPF0756 membrane protein PTH_1817 (146 aa).

4 helical membrane passes run 6 to 26 (LLIG…ILLI), 46 to 66 (MGLT…KASW), 69 to 89 (IISS…ALAT), and 105 to 125 (IVFG…GIPV).

Belongs to the UPF0756 family.

Its subcellular location is the cell membrane. In Pelotomaculum thermopropionicum (strain DSM 13744 / JCM 10971 / SI), this protein is UPF0756 membrane protein PTH_1817.